The chain runs to 158 residues: Large ribosomal subunit protein bL17 (158 aa).

A disordered region spans residues 119–158; the sequence is APAAAPEAEEKGEKKAAKAPKAEKAPKAEKKPAKKAAKAE. Residues 126-158 show a composition bias toward basic and acidic residues; sequence AEEKGEKKAAKAPKAEKAPKAEKKPAKKAAKAE.

It belongs to the bacterial ribosomal protein bL17 family. In terms of assembly, part of the 50S ribosomal subunit. Contacts protein L32.

In Anaeromyxobacter sp. (strain K), this protein is Large ribosomal subunit protein bL17.